We begin with the raw amino-acid sequence, 514 residues long: MTHPVPDTGPASENMAPHRLRARPLGLFLPQQQPAVVMRTDCYICRSEGLAARSQVLIQAGGREILASLLHSSGEMIAPGEIGLSESAAAALGVAPGDAVSVRHAPPIDSFGALRGRVYGNRLDGAAFRSIVDDIVAGRYSDVHLSAFVTACSAFPLDHAETVALTGAMVASGERLAWGSDVVVDKHSVGGLPGNRTTPIVVAIVAALGLIMPKTSSRAITSPAGTADTMETLAPVNLDVGAIRRVVDHEGGCIVWGGAVSLSPADDIIIGVERVLDLDAAGQLVASVLSKKLAAGATHLVVDMPIGPTAKVRSPADAAALSGALQKVAAEFGLILKVMQGDGREPIGRGIGPALEARDILAVLEGRDPPPDLARRACELAGALIELAGRASPGTGAALAAQVLADGSAWSKFQRICEAQGGMRTPPLSNHRHVMTAQRPGRVSAIDNRRLAKLAKLAGAPAAKSAGLEMHVRLGSAVETGTPLLTVHAESQGELAYALAYAEAVGPILELSDR.

It belongs to the thymidine/pyrimidine-nucleoside phosphorylase family. Type 2 subfamily.

It carries out the reaction thymidine + phosphate = 2-deoxy-alpha-D-ribose 1-phosphate + thymine. The polypeptide is Putative thymidine phosphorylase (Sphingopyxis alaskensis (strain DSM 13593 / LMG 18877 / RB2256) (Sphingomonas alaskensis)).